The following is a 221-amino-acid chain: Ribosome maturation factor RimM (221 aa).

Residues 1-23 (MTERKQGAAAPRPLNRPQGESPK) are disordered. Positions 144–221 (ENEFYWVDLI…RIVVDWGLDY (78 aa)) constitute a PRC barrel domain.

The protein belongs to the RimM family. In terms of assembly, binds ribosomal protein uS19.

It localises to the cytoplasm. An accessory protein needed during the final step in the assembly of 30S ribosomal subunit, possibly for assembly of the head region. Essential for efficient processing of 16S rRNA. May be needed both before and after RbfA during the maturation of 16S rRNA. It has affinity for free ribosomal 30S subunits but not for 70S ribosomes. The protein is Ribosome maturation factor RimM of Cupriavidus pinatubonensis (strain JMP 134 / LMG 1197) (Cupriavidus necator (strain JMP 134)).